Reading from the N-terminus, the 176-residue chain is 3-hydroxydecanoyl-[acyl-carrier-protein] dehydratase (176 aa).

His70 is a catalytic residue.

The protein belongs to the thioester dehydratase family. FabA subfamily. In terms of assembly, homodimer.

Its subcellular location is the cytoplasm. The enzyme catalyses a (3R)-hydroxyacyl-[ACP] = a (2E)-enoyl-[ACP] + H2O. The catalysed reaction is (3R)-hydroxydecanoyl-[ACP] = (2E)-decenoyl-[ACP] + H2O. It carries out the reaction (2E)-decenoyl-[ACP] = (3Z)-decenoyl-[ACP]. It functions in the pathway lipid metabolism; fatty acid biosynthesis. Its function is as follows. Necessary for the introduction of cis unsaturation into fatty acids. Catalyzes the dehydration of (3R)-3-hydroxydecanoyl-ACP to E-(2)-decenoyl-ACP and then its isomerization to Z-(3)-decenoyl-ACP. Can catalyze the dehydratase reaction for beta-hydroxyacyl-ACPs with saturated chain lengths up to 16:0, being most active on intermediate chain length. The sequence is that of 3-hydroxydecanoyl-[acyl-carrier-protein] dehydratase from Alkalilimnicola ehrlichii (strain ATCC BAA-1101 / DSM 17681 / MLHE-1).